A 353-amino-acid polypeptide reads, in one-letter code: Guanine nucleotide-binding protein subunit alpha (353 aa).

The tract at residues 1 to 26 (MGCGMSVEEKEGKARNEEIENQLKRD) is disordered. The N-myristoyl glycine moiety is linked to residue G2. The S-palmitoyl cysteine moiety is linked to residue C3. Positions 7-26 (VEEKEGKARNEEIENQLKRD) are enriched in basic and acidic residues. The region spanning 32–353 (NEIKMLLLGA…QENLRLCGLI (322 aa)) is the G-alpha domain. The G1 motif stretch occupies residues 35-48 (KMLLLGAGESGKST). GTP-binding residues include E43, S44, G45, K46, S47, T48, D150, L175, T181, G203, N269, K270, D272, and A325. S47 contacts Mg(2+). The segment at 173–181 (DVLRSRVKT) is G2 motif. T181 provides a ligand contact to Mg(2+). The interval 196-205 (YRMFDVGGQR) is G3 motif. The G4 motif stretch occupies residues 265–272 (ILFLNKID). The segment at 323–328 (TCATDT) is G5 motif.

This sequence belongs to the G-alpha family. G(q) subfamily. G proteins are composed of 3 units; alpha, beta and gamma. The alpha chain contains the guanine nucleotide binding site. It depends on Mg(2+) as a cofactor.

Guanine nucleotide-binding proteins (G proteins) are involved as modulators or transducers in various transmembrane signaling systems. The polypeptide is Guanine nucleotide-binding protein subunit alpha (SSG-1) (Sporothrix schenckii (strain ATCC 58251 / de Perez 2211183) (Rose-picker's disease fungus)).